A 302-amino-acid polypeptide reads, in one-letter code: Tyrosine--tRNA ligase 2 (302 aa).

An L-tyrosine-binding site is contributed by Y33. The 'HIGH' region signature appears at 38-47; the sequence is PTADSLHLGH. Positions 160 and 164 each coordinate L-tyrosine. The short motif at 220-224 is the 'KMSKS' region element; the sequence is KFGKS. An ATP-binding site is contributed by K223.

The protein belongs to the class-I aminoacyl-tRNA synthetase family. TyrS type 1 subfamily. Homodimer.

The protein localises to the cytoplasm. It catalyses the reaction tRNA(Tyr) + L-tyrosine + ATP = L-tyrosyl-tRNA(Tyr) + AMP + diphosphate + H(+). Catalyzes the attachment of tyrosine to tRNA(Tyr) in a two-step reaction: tyrosine is first activated by ATP to form Tyr-AMP and then transferred to the acceptor end of tRNA(Tyr). This is Tyrosine--tRNA ligase 2 (tyrS2) from Streptococcus thermophilus (strain CNRZ 1066).